A 330-amino-acid chain; its full sequence is Phenylalanine--tRNA ligase alpha subunit (330 aa).

Mg(2+) is bound at residue E257.

Belongs to the class-II aminoacyl-tRNA synthetase family. Phe-tRNA synthetase alpha subunit type 1 subfamily. Tetramer of two alpha and two beta subunits. Requires Mg(2+) as cofactor.

It localises to the cytoplasm. It catalyses the reaction tRNA(Phe) + L-phenylalanine + ATP = L-phenylalanyl-tRNA(Phe) + AMP + diphosphate + H(+). The sequence is that of Phenylalanine--tRNA ligase alpha subunit from Nostoc punctiforme (strain ATCC 29133 / PCC 73102).